Here is a 313-residue protein sequence, read N- to C-terminus: MPLGLRRKKKFNTKETSRLVEGEHTDAAVRSLPSPPAPARRLVFHTQLAHGSATGRVENFSSIQELYAKIAGVFEIPPSEILYCTLNTPKVDMGKLLGAQIGLEDFIFAHIKGIKKEVNVYKSEDSLGLTITDNGAGYAFIKRIKDDSIIDSVKTICVGDHIEAINGENIVGWRHFDVAKKLKELKKEELFTLTLIEPKKAFDMEPRSKAGKSSTGKIGTGRETLRLRSKGPATVEEVPSEAKEKAIGKVDDLLELYMGIRDTDLATTMFEAGKDKGNPDEFAVALDETLGDFAFPDEFVFDVWGVIGDAKQE.

Residues lysine 14 to alanine 27 show a composition bias toward basic and acidic residues. A disordered region spans residues lysine 14 to serine 34. In terms of domain architecture, PDZ spans glutamate 117–glutamate 197.

Belongs to the GIPC family. Probably interacts with SEMA5A.

Its subcellular location is the cytoplasm. In Bos taurus (Bovine), this protein is PDZ domain-containing protein GIPC2 (GIPC2).